The following is a 157-amino-acid chain: Arginine regulator (157 aa).

Belongs to the ArgR family.

The protein localises to the cytoplasm. It functions in the pathway amino-acid degradation; L-arginine degradation via ADI pathway. In terms of biological role, regulates the transcription of the arc operon, involved in arginine catabolism. The polypeptide is Arginine regulator (argR1) (Streptococcus pyogenes serotype M3 (strain ATCC BAA-595 / MGAS315)).